The primary structure comprises 246 residues: tRNA (guanine-N(7)-)-methyltransferase (246 aa).

Residues Glu-77, Glu-102, Asp-129, and Asp-152 each coordinate S-adenosyl-L-methionine. Asp-152 is an active-site residue. Residues Lys-156, Asp-188, and 225–228 (TKFE) contribute to the substrate site.

It belongs to the class I-like SAM-binding methyltransferase superfamily. TrmB family.

The enzyme catalyses guanosine(46) in tRNA + S-adenosyl-L-methionine = N(7)-methylguanosine(46) in tRNA + S-adenosyl-L-homocysteine. Its pathway is tRNA modification; N(7)-methylguanine-tRNA biosynthesis. Its function is as follows. Catalyzes the formation of N(7)-methylguanine at position 46 (m7G46) in tRNA. This chain is tRNA (guanine-N(7)-)-methyltransferase, found in Haemophilus influenzae (strain 86-028NP).